A 772-amino-acid polypeptide reads, in one-letter code: TSA1-like protein (772 aa).

Residues 1-24 (MGTKFLALGLSLCLVLSSFYQVSC) form the signal peptide. Residues 49 to 72 (LQGNEAVDQTETSGQKNSTVSDNN) are disordered. 10 EFE repeat repeats span residues 98-138 (GAVT…KVEE), 139-176 (SKDD…DSAQ), 177-213 (GLDD…DDLT), 214-251 (GIND…STSS), 252-292 (TDDE…VKDD), 293-330 (VDDK…ADNK), 331-368 (AEGD…DFSE), 369-407 (GDDS…STGD), 408-439 (KDDD…EELK), and 440-472 (NESE…NGEN). Positions 98 to 472 (GAVTDEVDKP…ATNAKANGEN (375 aa)) are 10 X approximate EFE repeat. Residues 187–476 (QSMLDEIERD…KANGENSAKN (290 aa)) are a coiled coil. 2 disordered regions span residues 465-487 (NAKA…VQKS) and 555-585 (HRKE…ATSE). A compositionally biased stretch (polar residues) spans 466 to 487 (AKANGENSAKNPSTISTTVQKS). A compositionally biased stretch (low complexity) spans 561 to 585 (SKVGSVLGSSSSVTSTTSESAATSE). Residues 688-748 (DALHIRIVAI…AVHKAKDEQA (61 aa)) are a coiled coil.

As to quaternary structure, has no interaction with PYK10 and is not part of the PYK10 complex. Interacts directly or indirectly with MEB1 and MEB2. Expressed in roots. Detected in shoot apex.

Its subcellular location is the endoplasmic reticulum lumen. Functionally, responsible for the ER body formation. Regulates the number and shape of the ER bodies and the accumulation of PYK10 in ER bodies, but is not involved in the expression of PYK10. The protein is TSA1-like protein (NAI2) of Arabidopsis thaliana (Mouse-ear cress).